The sequence spans 412 residues: Argininosuccinate synthase (412 aa).

Residues 10–18 (AYSGGLDTS) and Ala36 contribute to the ATP site. L-citrulline-binding residues include Tyr87 and Ser92. Phosphotyrosine is present on Tyr87. Position 112 is an N6-acetyllysine (Lys112). Tyr113 is subject to Phosphotyrosine. 115–123 (SHGATGKGN) contributes to the ATP binding site. Thr119, Asn123, and Asp124 together coordinate L-aspartate. Asn123 contacts L-citrulline. An L-citrulline-binding site is contributed by Arg127. 2 positions are modified to N6-acetyllysine; by CLOCK: Lys165 and Lys176. Phosphoserine is present on residues Ser177 and Ser180. Residues Ser180 and Ser189 each contribute to the L-citrulline site. Position 219 is a phosphoserine (Ser219). Positions 270 and 282 each coordinate L-citrulline.

It belongs to the argininosuccinate synthase family. Type 1 subfamily. Homotetramer. Interacts with NMRAL1. Interacts with CLOCK; in a circadian manner. Forms tissue-specific complexes with ASL, SLC7A1, HSP90AA1 and nitric oxide synthase NOS1, NOS2 or NOS3; the complex regulates cell-autonomous L-arginine synthesis and citrulline recycling while channeling extracellular L-arginine to nitric oxide synthesis pathway. Acetylated by CLOCK in a circadian manner which negatively regulates its enzyme activity. Deacetylated by histone deacetylases. As to expression, widely expressed.

It localises to the cytoplasm. It is found in the cytosol. It carries out the reaction L-citrulline + L-aspartate + ATP = 2-(N(omega)-L-arginino)succinate + AMP + diphosphate + H(+). It functions in the pathway amino-acid biosynthesis; L-arginine biosynthesis; L-arginine from L-ornithine and carbamoyl phosphate: step 2/3. Its pathway is nitrogen metabolism; urea cycle; (N(omega)-L-arginino)succinate from L-aspartate and L-citrulline: step 1/1. Functionally, one of the enzymes of the urea cycle, the metabolic pathway transforming neurotoxic amonia produced by protein catabolism into inocuous urea in the liver of ureotelic animals. Catalyzes the formation of arginosuccinate from aspartate, citrulline and ATP and together with ASL it is responsible for the biosynthesis of arginine in most body tissues. The protein is Argininosuccinate synthase of Mus musculus (Mouse).